Consider the following 79-residue polypeptide: Sulfur carrier protein TusA (79 aa).

The active-site Cysteine persulfide intermediate is the cysteine 17.

Belongs to the sulfur carrier protein TusA family.

It is found in the cytoplasm. Functionally, sulfur carrier protein which probably makes part of a sulfur-relay system. This chain is Sulfur carrier protein TusA, found in Haemophilus influenzae (strain PittEE).